A 323-amino-acid chain; its full sequence is Aspartate carbamoyltransferase catalytic subunit (323 aa).

Positions 71 and 72 each coordinate carbamoyl phosphate. Position 99 (Lys99) interacts with L-aspartate. Carbamoyl phosphate contacts are provided by Arg121, His151, and Gln154. L-aspartate contacts are provided by Arg184 and Arg239. Carbamoyl phosphate contacts are provided by Gly280 and Pro281.

It belongs to the aspartate/ornithine carbamoyltransferase superfamily. ATCase family. In terms of assembly, heterododecamer (2C3:3R2) of six catalytic PyrB chains organized as two trimers (C3), and six regulatory PyrI chains organized as three dimers (R2).

The catalysed reaction is carbamoyl phosphate + L-aspartate = N-carbamoyl-L-aspartate + phosphate + H(+). The protein operates within pyrimidine metabolism; UMP biosynthesis via de novo pathway; (S)-dihydroorotate from bicarbonate: step 2/3. Its function is as follows. Catalyzes the condensation of carbamoyl phosphate and aspartate to form carbamoyl aspartate and inorganic phosphate, the committed step in the de novo pyrimidine nucleotide biosynthesis pathway. The sequence is that of Aspartate carbamoyltransferase catalytic subunit from Ralstonia nicotianae (strain ATCC BAA-1114 / GMI1000) (Ralstonia solanacearum).